We begin with the raw amino-acid sequence, 168 residues long: Phosphopantetheine adenylyltransferase (168 aa).

Ser9 provides a ligand contact to substrate. Residues 9-10 (SF) and His17 contribute to the ATP site. Lys41, Leu73, and Arg87 together coordinate substrate. Residues 88–90 (GLR), Glu98, and 123–129 (YAFLSSS) contribute to the ATP site.

The protein belongs to the bacterial CoaD family. Homohexamer. It depends on Mg(2+) as a cofactor.

It is found in the cytoplasm. The catalysed reaction is (R)-4'-phosphopantetheine + ATP + H(+) = 3'-dephospho-CoA + diphosphate. Its pathway is cofactor biosynthesis; coenzyme A biosynthesis; CoA from (R)-pantothenate: step 4/5. Reversibly transfers an adenylyl group from ATP to 4'-phosphopantetheine, yielding dephospho-CoA (dPCoA) and pyrophosphate. This Heliobacterium modesticaldum (strain ATCC 51547 / Ice1) protein is Phosphopantetheine adenylyltransferase.